Reading from the N-terminus, the 63-residue chain is Large ribosomal subunit protein bL28 (63 aa).

Positions M1 to N22 are disordered.

Belongs to the bacterial ribosomal protein bL28 family.

The chain is Large ribosomal subunit protein bL28 from Campylobacter hominis (strain ATCC BAA-381 / DSM 21671 / CCUG 45161 / LMG 19568 / NCTC 13146 / CH001A).